The primary structure comprises 108 residues: Small cysteine and glycine repeat-containing protein 8 (108 aa).

The segment at 4 to 84 is 12 X 2 AA repeats of CG; sequence CGCGGCGGGC…RRTCSSCGCG (81 aa).

It belongs to the KRTAP type 28 family.

In terms of biological role, in the hair cortex, hair keratin intermediate filaments are embedded in an interfilamentous matrix, consisting of hair keratin-associated proteins (KRTAP), which are essential for the formation of a rigid and resistant hair shaft through their extensive disulfide bond cross-linking with abundant cysteine residues of hair keratins. The matrix proteins include the high-sulfur and high-glycine-tyrosine keratins. In Homo sapiens (Human), this protein is Small cysteine and glycine repeat-containing protein 8.